We begin with the raw amino-acid sequence, 394 residues long: Phosphoglycerate kinase (394 aa).

Substrate-binding positions include 21–23, R36, 59–62, R118, and R151; these read DFN and HFGR. Residues K201, E323, and 349 to 352 each bind ATP; that span reads GGDS.

Belongs to the phosphoglycerate kinase family. As to quaternary structure, monomer.

Its subcellular location is the cytoplasm. The enzyme catalyses (2R)-3-phosphoglycerate + ATP = (2R)-3-phospho-glyceroyl phosphate + ADP. Its pathway is carbohydrate degradation; glycolysis; pyruvate from D-glyceraldehyde 3-phosphate: step 2/5. In Brevibacillus brevis (strain 47 / JCM 6285 / NBRC 100599), this protein is Phosphoglycerate kinase.